The primary structure comprises 491 residues: Glutamate--tRNA ligase (491 aa).

The short motif at 13–23 (PSPTGFLHIGN) is the 'HIGH' region element. Zn(2+)-binding residues include cysteine 110, cysteine 112, cysteine 137, and histidine 139. The 'KMSKS' region signature appears at 254–258 (KLSKR). Lysine 257 is a binding site for ATP.

The protein belongs to the class-I aminoacyl-tRNA synthetase family. Glutamate--tRNA ligase type 1 subfamily. Monomer. Zn(2+) serves as cofactor.

It is found in the cytoplasm. It catalyses the reaction tRNA(Glu) + L-glutamate + ATP = L-glutamyl-tRNA(Glu) + AMP + diphosphate. Functionally, catalyzes the attachment of glutamate to tRNA(Glu) in a two-step reaction: glutamate is first activated by ATP to form Glu-AMP and then transferred to the acceptor end of tRNA(Glu). This Listeria innocua serovar 6a (strain ATCC BAA-680 / CLIP 11262) protein is Glutamate--tRNA ligase.